A 412-amino-acid polypeptide reads, in one-letter code: 23S rRNA (uracil(747)-C(5))-methyltransferase (412 aa).

[4Fe-4S] cluster-binding residues include C63, C69, C72, and C139. Positions 255, 281, 302, and 343 each coordinate S-adenosyl-L-methionine. The active-site Nucleophile is C369.

It belongs to the class I-like SAM-binding methyltransferase superfamily. RNA M5U methyltransferase family.

It catalyses the reaction uridine(747) in 23S rRNA + S-adenosyl-L-methionine = 5-methyluridine(747) in 23S rRNA + S-adenosyl-L-homocysteine + H(+). Its function is as follows. Catalyzes the formation of 5-methyl-uridine at position equivalent to 747 (m5U747) in 23S rRNA. In Pyrococcus horikoshii (strain ATCC 700860 / DSM 12428 / JCM 9974 / NBRC 100139 / OT-3), this protein is 23S rRNA (uracil(747)-C(5))-methyltransferase.